Consider the following 424-residue polypeptide: Enolase (424 aa).

Residue Gln162 participates in (2R)-2-phosphoglycerate binding. Residue Glu204 is the Proton donor of the active site. Asp241, Glu284, and Asp311 together coordinate Mg(2+). 4 residues coordinate (2R)-2-phosphoglycerate: Lys336, Arg365, Ser366, and Lys387. Lys336 functions as the Proton acceptor in the catalytic mechanism.

Belongs to the enolase family. The cofactor is Mg(2+).

It is found in the cytoplasm. It localises to the secreted. The protein resides in the cell surface. It carries out the reaction (2R)-2-phosphoglycerate = phosphoenolpyruvate + H2O. The protein operates within carbohydrate degradation; glycolysis; pyruvate from D-glyceraldehyde 3-phosphate: step 4/5. Its function is as follows. Catalyzes the reversible conversion of 2-phosphoglycerate (2-PG) into phosphoenolpyruvate (PEP). It is essential for the degradation of carbohydrates via glycolysis. This Mesorhizobium japonicum (strain LMG 29417 / CECT 9101 / MAFF 303099) (Mesorhizobium loti (strain MAFF 303099)) protein is Enolase.